Consider the following 311-residue polypeptide: Olfactory receptor 1D4 (311 aa).

Residues 1 to 25 (MDGDNQSENSQFLLLGISESPEQQQ) lie on the Extracellular side of the membrane. Asparagine 5 is a glycosylation site (N-linked (GlcNAc...) asparagine). The helical transmembrane segment at 26–49 (ILFWMFLSMYLVTVLGNVLIILAI) threads the bilayer. Residues 50–57 (SSDSHLHT) are Cytoplasmic-facing. The chain crosses the membrane as a helical span at residues 58–79 (PMYFFLANLSFTDLFFVTNTIP). Topologically, residues 80 to 100 (KMLVNFQSQNKAISYAGCLTQ) are extracellular. Cysteine 97 and cysteine 189 form a disulfide bridge. The helical transmembrane segment at 101–120 (LYFLVSLVTLDNLILAVMAY) threads the bilayer. Residues 121–140 (DRYVAICCPLHYVTAMSPGL) lie on the Cytoplasmic side of the membrane. Residues 141–158 (CVLLLSLCWGLSVLYGLL) traverse the membrane as a helical segment. Topologically, residues 159–196 (LTFLLTRVTFCGPREIHYLFCDMYILLWLACSNTHIIH) are extracellular. Residues 197–220 (TALIATGCFIFLTLLGFMTTSYVR) traverse the membrane as a helical segment. The Cytoplasmic segment spans residues 221 to 237 (IVRTILQMPSASKKYKT). A helical membrane pass occupies residues 238–260 (FSTCASHLGVVSLFYGTLAMVYL). Topologically, residues 261–271 (QPLHTYSMKDS) are extracellular. Residues 272-291 (VATVMYAVLTPMMNPFIYSL) form a helical membrane-spanning segment. Over 292 to 311 (RNKDMHGAPGRVLWRPFQRP) the chain is Cytoplasmic.

It belongs to the G-protein coupled receptor 1 family.

Its subcellular location is the cell membrane. Its function is as follows. Odorant receptor. The chain is Olfactory receptor 1D4 (OR1D4) from Homo sapiens (Human).